We begin with the raw amino-acid sequence, 481 residues long: Glutamate--tRNA ligase (481 aa).

The 'HIGH' region motif lies at 9–19 (PSPTGNLHIGT). Positions 249 to 253 (KLSKR) match the 'KMSKS' region motif. Lys252 serves as a coordination point for ATP.

The protein belongs to the class-I aminoacyl-tRNA synthetase family. Glutamate--tRNA ligase type 1 subfamily. As to quaternary structure, monomer.

Its subcellular location is the cytoplasm. It carries out the reaction tRNA(Glu) + L-glutamate + ATP = L-glutamyl-tRNA(Glu) + AMP + diphosphate. Its function is as follows. Catalyzes the attachment of glutamate to tRNA(Glu) in a two-step reaction: glutamate is first activated by ATP to form Glu-AMP and then transferred to the acceptor end of tRNA(Glu). This is Glutamate--tRNA ligase from Picosynechococcus sp. (strain ATCC 27264 / PCC 7002 / PR-6) (Agmenellum quadruplicatum).